The following is a 490-amino-acid chain: Chromosomal replication initiator protein DnaA (490 aa).

The segment at 1–91 is domain I, interacts with DnaA modulators; sequence MTMKGGVASQ…GELWAAHDAT (91 aa). Positions 91–147 are domain II; sequence TGRRIDLKSRLEFEAAAGAYVEATPKAVAAEPIEIVLPVSTDAPTVVAPSAKSPRTQ. The interval 148–370 is domain III, AAA+ region; the sequence is GLQERFTFET…GALNTLSARA (223 aa). 4 residues coordinate ATP: Gly-192, Gly-194, Lys-195, and Thr-196. The interval 371 to 490 is domain IV, binds dsDNA; the sequence is GEGLSRMTLD…LETLTRKLRG (120 aa).

It belongs to the DnaA family. As to quaternary structure, oligomerizes as a right-handed, spiral filament on DNA at oriC.

Its subcellular location is the cytoplasm. Functionally, plays an essential role in the initiation and regulation of chromosomal replication. ATP-DnaA binds to the origin of replication (oriC) to initiate formation of the DNA replication initiation complex once per cell cycle. Binds the DnaA box (a 9 base pair repeat at the origin) and separates the double-stranded (ds)DNA. Forms a right-handed helical filament on oriC DNA; dsDNA binds to the exterior of the filament while single-stranded (ss)DNA is stabiized in the filament's interior. The ATP-DnaA-oriC complex binds and stabilizes one strand of the AT-rich DNA unwinding element (DUE), permitting loading of DNA polymerase. After initiation quickly degrades to an ADP-DnaA complex that is not apt for DNA replication. Binds acidic phospholipids. The sequence is that of Chromosomal replication initiator protein DnaA from Caulobacter vibrioides (strain ATCC 19089 / CIP 103742 / CB 15) (Caulobacter crescentus).